We begin with the raw amino-acid sequence, 120 residues long: MEPLGDRRPCCVCITKNRNCPRFCEYAEYFPYELRSHYESTNELFGTPKIIKMMRHAPEEKKQMLATSIIMEGNAWTNDPVSGGFGMVQKIMWKIMLHKAYLHELEEKIKEEKEKIELHL.

The LOB domain occupies 8 to 109 (RPCCVCITKN…AYLHELEEKI (102 aa)).

Belongs to the LOB domain-containing protein family.

The chain is LOB domain-containing protein 8 (LBD8) from Arabidopsis thaliana (Mouse-ear cress).